Here is a 65-residue protein sequence, read N- to C-terminus: Large ribosomal subunit protein bL28 (65 aa).

It belongs to the bacterial ribosomal protein bL28 family.

The chain is Large ribosomal subunit protein bL28 from Lachnoclostridium phytofermentans (strain ATCC 700394 / DSM 18823 / ISDg) (Clostridium phytofermentans).